A 231-amino-acid chain; its full sequence is Large ribosomal subunit protein uL1 (231 aa).

It belongs to the universal ribosomal protein uL1 family. Part of the 50S ribosomal subunit.

Binds directly to 23S rRNA. The L1 stalk is quite mobile in the ribosome, and is involved in E site tRNA release. Functionally, protein L1 is also a translational repressor protein, it controls the translation of the L11 operon by binding to its mRNA. The polypeptide is Large ribosomal subunit protein uL1 (Shouchella clausii (strain KSM-K16) (Alkalihalobacillus clausii)).